The sequence spans 181 residues: Protein Syd (181 aa).

Belongs to the Syd family.

It localises to the cell inner membrane. Functionally, interacts with the SecY protein in vivo. May bind preferentially to an uncomplexed state of SecY, thus functioning either as a chelating agent for excess SecY in the cell or as a regulatory factor that negatively controls the translocase function. The protein is Protein Syd of Klebsiella pneumoniae (strain 342).